The following is a 1235-amino-acid chain: Cullin-associated NEDD8-dissociated protein 2 (1235 aa).

S2 bears the N-acetylserine mark. HEAT repeat units lie at residues 2-39 (STGA…KDSI), 44-81 (DSER…KVKE), 83-119 (QVEN…ELPP), 129-167 (NVCR…RLGA), 171-208 (TFHA…ACST), 210-246 (LFVE…SVGR), 254-291 (AHLD…KCPK), 326-367 (TEDS…SRPD), 371-408 (DFHC…HTRP), 431-468 (AQVP…VLPG), 516-553 (PHLP…TLWP), 564-603 (PYVG…HLGD), 607-644 (DDLE…LRLD), 647-684 (PILA…SQGL), 689-726 (PAVR…TQPS), 730-769 (EVSG…TRPP), 771-812 (VEYS…ALSA), 856-893 (GPQR…GNLP), 895-930 (FLPF…DNLK), 932-965 (YVED…LVFV), 966-1002 (NPPY…DQPH), 1006-1043 (PLLK…NKPS), 1047-1083 (DLLD…DDGL), 1104-1140 (LDMC…LCPA), 1156-1193 (TCTA…NPEV), and 1203-1235 (SAQI…MELS). The disordered stretch occupies residues 314-345 (YDHDSDDEEQMETEDSEFSEQESEDEYSDDDD). Residues 317–345 (DSDDEEQMETEDSEFSEQESEDEYSDDDD) show a composition bias toward acidic residues.

This sequence belongs to the CAND family. Binds TBP, CNOT3 and UBE3C. Ubiquitinated and targeted for proteasomal degradation. In terms of tissue distribution, highly expressed in embryonic limb buds.

It localises to the nucleus. Probable assembly factor of SCF (SKP1-CUL1-F-box protein) E3 ubiquitin ligase complexes that promotes the exchange of the substrate-recognition F-box subunit in SCF complexes, thereby playing a key role in the cellular repertoire of SCF complexes. The sequence is that of Cullin-associated NEDD8-dissociated protein 2 (Cand2) from Mus musculus (Mouse).